Consider the following 75-residue polypeptide: Sec-independent protein translocase protein TatA (75 aa).

A helical transmembrane segment spans residues 1-21; that stretch reads MGSFSIWHWLVVLAIVLLVFG. The segment at 40-75 is disordered; it reads KKGMRDEDKPNAQLGDESRSQDASRTAQDEHDRTPR.

It belongs to the TatA/E family. As to quaternary structure, the Tat system comprises two distinct complexes: a TatABC complex, containing multiple copies of TatA, TatB and TatC subunits, and a separate TatA complex, containing only TatA subunits. Substrates initially bind to the TatABC complex, which probably triggers association of the separate TatA complex to form the active translocon.

The protein resides in the cell inner membrane. In terms of biological role, part of the twin-arginine translocation (Tat) system that transports large folded proteins containing a characteristic twin-arginine motif in their signal peptide across membranes. TatA could form the protein-conducting channel of the Tat system. The polypeptide is Sec-independent protein translocase protein TatA (Stenotrophomonas maltophilia (strain R551-3)).